We begin with the raw amino-acid sequence, 199 residues long: Recombination protein RecR (199 aa).

The segment at 57-72 (CQACRTFTEETLCPIC) adopts a C4-type zinc-finger fold. One can recognise a Toprim domain in the interval 81 to 176 (EVICVVETPA…SVSRIAHGVP (96 aa)).

Belongs to the RecR family.

May play a role in DNA repair. It seems to be involved in an RecBC-independent recombinational process of DNA repair. It may act with RecF and RecO. The chain is Recombination protein RecR from Shewanella woodyi (strain ATCC 51908 / MS32).